We begin with the raw amino-acid sequence, 538 residues long: MWSGRSSFTSLVVGVFVVYVVHTCWVMYGIVYTRPCSGDANCIQPYLARRPKLQLSVYTTTRSHLGAENNIDLVLNVEDFDVESKFERTVNVSVPKKTRNNGTLYAYIFLHHAGVLPWHDGKQVHLVSPLTTYMVPKPEEINLLTGESDTQQIEAEKKPTSALDEPVSHWRPRLALNVMADNFVFDGSSLPADVHRYMKMIQLGKTVHYLPILFIDQLSNRVKDLMVINRSTTELPLTVSYDKVSLGRLRFWIHMQDAVYSLQQFGFSEKDADEVKGIFVDTNLYFLALTFFVAAFHLLFDFLAFKNDISFWKKKKSMIGMSTKAVLWRCFSTVVIFLFLLDEQTSLLVLVPAGVGAAIELWKVKKALKMTILWRGLMPEFELGTYSESERKTEEYDTQAMKYLSYLLYPLCVGGAVYSLLNIKYKSWYSWLINSFVNGVYAFGFLFMLPQLFVNYKLKSVAHLPWKAFTYKAFNTFIDDVFAFIITMPTSHRLACFRDDVVFLVYLYQRWLYPVDKRRVNEFGESYEEKAARAPHTD.

Residues 1–10 (MWSGRSSFTS) are Cytoplasmic-facing. The chain crosses the membrane as a helical span at residues 11 to 31 (LVVGVFVVYVVHTCWVMYGIV). The Extracellular portion of the chain corresponds to 32–284 (YTRPCSGDAN…VKGIFVDTNL (253 aa)). Asn-91 and Asn-101 each carry an N-linked (GlcNAc...) asparagine glycan. Residues 285–305 (YFLALTFFVAAFHLLFDFLAF) traverse the membrane as a helical segment. Topologically, residues 306–324 (KNDISFWKKKKSMIGMSTK) are cytoplasmic. The chain crosses the membrane as a helical span at residues 325–342 (AVLWRCFSTVVIFLFLLD). The Extracellular segment spans residues 343 to 346 (EQTS). The helical transmembrane segment at 347 to 364 (LLVLVPAGVGAAIELWKV) threads the bilayer. The Cytoplasmic segment spans residues 365–402 (KKALKMTILWRGLMPEFELGTYSESERKTEEYDTQAMK). The chain crosses the membrane as a helical span at residues 403 to 423 (YLSYLLYPLCVGGAVYSLLNI). The Extracellular portion of the chain corresponds to 424–428 (KYKSW). Residues 429–449 (YSWLINSFVNGVYAFGFLFML) traverse the membrane as a helical segment. The Cytoplasmic segment spans residues 450 to 538 (PQLFVNYKLK…EKAARAPHTD (89 aa)).

This sequence belongs to the CLPTM1 family.

Its subcellular location is the endoplasmic reticulum membrane. The enzyme catalyses a 6-(alpha-D-glucosaminyl)-1-(1,2-diacyl-sn-glycero-3-phospho)-1D-myo-inositol(in) = a 6-(alpha-D-glucosaminyl)-1-(1,2-diacyl-sn-glycero-3-phospho)-1D-myo-inositol(out). It catalyses the reaction 6-(alpha-D-glucosaminyl)-(1-octadecanoyl,2-(9Z)-octadecenoyl-sn-glycero-3-phospho)-1D-myo-inositol(in) = 6-(alpha-D-glucosaminyl)-(1-octadecanoyl,2-(9Z)-octadecenoyl-sn-glycero-3-phospho)-1D-myo-inositol(out). The catalysed reaction is a 1,2-diacyl-sn-glycero-3-phospho-(1D-myo-inositol)(in) = a 1,2-diacyl-sn-glycero-3-phospho-(1D-myo-inositol)(out). It carries out the reaction a 1,2-diacyl-sn-glycero-3-phosphocholine(in) = a 1,2-diacyl-sn-glycero-3-phosphocholine(out). The enzyme catalyses a 1,2-diacyl-sn-glycero-3-phosphoethanolamine(in) = a 1,2-diacyl-sn-glycero-3-phosphoethanolamine(out). In terms of biological role, scramblase that mediates the translocation of glucosaminylphosphatidylinositol (alpha-D-GlcN-(1-6)-(1,2-diacyl-sn-glycero-3-phospho)-1D-myo-inositol, GlcN-PI) across the endoplasmic reticulum (ER) membrane, from the cytosolic leaflet to the luminal leaflet of the ER membrane, where it participates in the biosynthesis of glycosylphosphatidylinositol (GPI). GPI is a lipid glycoconjugate involved in post-translational modification of proteins. Can also translocate 1,2-diacyl-sn-glycero-3-phospho-(1D-myo-inositol) (phosphatidylinositol or PI), as well as several other phospholipids (1,2-diacyl-sn-glycero-3-phosphocholine, 1,2-diacyl-sn-glycero-3-phosphoethanolamine), and N-acetylglucosaminylphosphatidylinositol (GlcNAc-PI) in vitro. This is Lipid scramblase CLPTM1L (CLPTM1L) from Pongo abelii (Sumatran orangutan).